The chain runs to 506 residues: GTPase Der (506 aa).

EngA-type G domains follow at residues 3–166 (PVVA…GEQL) and 218–391 (IKIA…ACAT). GTP contacts are provided by residues 9–16 (GRPNVGKS), 56–60 (DTGGI), 118–121 (NKTD), 224–231 (GRPNVGKS), 271–275 (DTAGV), and 336–339 (NKWD). A KH-like domain is found at 392–476 (QKNSTSMLTR…PIRIQFQEGN (85 aa)).

Belongs to the TRAFAC class TrmE-Era-EngA-EngB-Septin-like GTPase superfamily. EngA (Der) GTPase family. As to quaternary structure, associates with the 50S ribosomal subunit.

In terms of biological role, GTPase that plays an essential role in the late steps of ribosome biogenesis. The sequence is that of GTPase Der from Actinobacillus pleuropneumoniae serotype 7 (strain AP76).